The following is a 157-amino-acid chain: MICIIMGSESDLKIAEKAVNILKEFGVEFEVRVASAHRTPELVEEIVKNSKADVFIAIAGLAAHLPGVVASLTTKPVIAVPVDAKLDGLDALLSSVQMPPGIPVATVGIDRGENAAILALEILALKDENIAKKLIEYREKMKKKVYASDEKVKEMFK.

Substrate is bound by residues Ser-8, Asp-11, and Arg-38.

The protein belongs to the AIR carboxylase family. Class I subfamily.

The catalysed reaction is 5-carboxyamino-1-(5-phospho-D-ribosyl)imidazole + H(+) = 5-amino-1-(5-phospho-D-ribosyl)imidazole-4-carboxylate. It functions in the pathway purine metabolism; IMP biosynthesis via de novo pathway; 5-amino-1-(5-phospho-D-ribosyl)imidazole-4-carboxylate from 5-amino-1-(5-phospho-D-ribosyl)imidazole (N5-CAIR route): step 2/2. Catalyzes the conversion of N5-carboxyaminoimidazole ribonucleotide (N5-CAIR) to 4-carboxy-5-aminoimidazole ribonucleotide (CAIR). In Methanocaldococcus jannaschii (strain ATCC 43067 / DSM 2661 / JAL-1 / JCM 10045 / NBRC 100440) (Methanococcus jannaschii), this protein is N5-carboxyaminoimidazole ribonucleotide mutase.